The following is a 163-amino-acid chain: Lipoprotein signal peptidase (163 aa).

The next 3 membrane-spanning stretches (helical) occupy residues 4–24 (SAAL…LLIL), 66–86 (LDAW…AWLW), and 92–112 (DHQF…GNII). Catalysis depends on residues Asp122 and Asp140. Residues 132 to 152 (SFAVFNLADSLITIGAGFILL) traverse the membrane as a helical segment.

It belongs to the peptidase A8 family.

The protein resides in the cell inner membrane. It carries out the reaction Release of signal peptides from bacterial membrane prolipoproteins. Hydrolyzes -Xaa-Yaa-Zaa-|-(S,diacylglyceryl)Cys-, in which Xaa is hydrophobic (preferably Leu), and Yaa (Ala or Ser) and Zaa (Gly or Ala) have small, neutral side chains.. The protein operates within protein modification; lipoprotein biosynthesis (signal peptide cleavage). This protein specifically catalyzes the removal of signal peptides from prolipoproteins. In Allorhizobium ampelinum (strain ATCC BAA-846 / DSM 112012 / S4) (Agrobacterium vitis (strain S4)), this protein is Lipoprotein signal peptidase.